The following is a 410-amino-acid chain: Gamma-glutamyl phosphate reductase (410 aa).

It belongs to the gamma-glutamyl phosphate reductase family.

It localises to the cytoplasm. The enzyme catalyses L-glutamate 5-semialdehyde + phosphate + NADP(+) = L-glutamyl 5-phosphate + NADPH + H(+). Its pathway is amino-acid biosynthesis; L-proline biosynthesis; L-glutamate 5-semialdehyde from L-glutamate: step 2/2. Functionally, catalyzes the NADPH-dependent reduction of L-glutamate 5-phosphate into L-glutamate 5-semialdehyde and phosphate. The product spontaneously undergoes cyclization to form 1-pyrroline-5-carboxylate. This chain is Gamma-glutamyl phosphate reductase, found in Sulfurovum sp. (strain NBC37-1).